The following is a 362-amino-acid chain: N-acylethanolamine-hydrolyzing acid amidase (362 aa).

The signal sequence occupies residues 1 to 33; that stretch reads MGTPAIRAACHGAHLALALLLLLSLSDPWLWAT. Residues N42 and N112 are each glycosylated (N-linked (GlcNAc...) asparagine). The active-site Nucleophile is C131. Residues N314 and N338 are each glycosylated (N-linked (GlcNAc...) asparagine).

Belongs to the acid ceramidase family. Heterodimer of an alpha and a beta subunit, produced by autocatalytic cleavage. In terms of processing, N-glycosylated. Tunicamycin treatment causes a reduction in specific activity against N-palmitoylethanolamine. Post-translationally, autoproteolytic cleavage at pH 4.5 gives rise to the alpha and beta subunit. Cleavage gives rise to a conformation change that activates the enzyme. The same catalytic Cys residue mediates the autoproteolytic cleavage and subsequent hydrolysis of lipid substrates. As to expression, expressed in brain, cecum, colon, heart, ileum, kidney, liver, lung, spleen, stomach, submaxillary gland, testis and thymus.

Its subcellular location is the lysosome. The protein localises to the membrane. The catalysed reaction is N-hexadecanoylethanolamine + H2O = ethanolamine + hexadecanoate. It catalyses the reaction an N-(long-chain fatty acyl)ethanolamine + H2O = a long-chain fatty acid + ethanolamine. The enzyme catalyses N-dodecanoylethanolamine + H2O = dodecanoate + ethanolamine. It carries out the reaction N-tetradecanoylethanolamine + H2O = tetradecanoate + ethanolamine. The catalysed reaction is an N-acylsphing-4-enine + H2O = sphing-4-enine + a fatty acid. It catalyses the reaction N-hexadecanoylsphing-4-enine + H2O = sphing-4-enine + hexadecanoate. The enzyme catalyses N-dodecanoylsphing-4-enine + H2O = dodecanoate + sphing-4-enine. Its pathway is lipid metabolism; fatty acid metabolism. Its activity is regulated as follows. Stimulated by DTT. Stimulated by nonionic detergent of the polyoxyethylenep-t-octylphenylether type (Triton X-100 or Nonidet P-40) whereas 3-[(3-cholamidopropyl)dimethylammonio]propane-1-sulfonate (CHAPS) and octyl alpha-D-glucopyranoside decrease the N-(long-chain-acyl)ethanolamine deacylase activity. Polysorbate 20 (Tween 20) is inhibitory. Stimulated by endogenous phospholipids such as choline- or ethanolamine-containing phospholipids, and dihydrolipoic acid. Degrades bioactive fatty acid amides to their corresponding acids, with the following preference: N-palmitoylethanolamine &gt; N-myristoylethanolamine &gt; N-stearoylethanolamine &gt; N-oleoylethanolamine &gt; N-linoleoylethanolamine &gt; N-arachidonoylethanolamine. The sequence is that of N-acylethanolamine-hydrolyzing acid amidase from Rattus norvegicus (Rat).